We begin with the raw amino-acid sequence, 192 residues long: MNTQDVIDIFKQADAILEGHFILTSGRHSATYMQKAKVFMHADLTEKLCRGLAEKIKESIAEPIDYVVGPAIGGLIPSYETSRHLGVPSLWVERVNGVFELRRFEIKKGARVVIVEDIVTTGLSIRETVEALAAAGAEVLASACILDRSGGKVDVGVPLIALAEYEIASYASDALPADLSVLPAIKPGSRNI.

116–124 serves as a coordination point for 5-phospho-alpha-D-ribose 1-diphosphate; sequence EDIVTTGLS. 2 residues coordinate orotate: Thr120 and Arg148.

It belongs to the purine/pyrimidine phosphoribosyltransferase family. PyrE subfamily. As to quaternary structure, homodimer. Mg(2+) is required as a cofactor.

The catalysed reaction is orotidine 5'-phosphate + diphosphate = orotate + 5-phospho-alpha-D-ribose 1-diphosphate. The protein operates within pyrimidine metabolism; UMP biosynthesis via de novo pathway; UMP from orotate: step 1/2. Its function is as follows. Catalyzes the transfer of a ribosyl phosphate group from 5-phosphoribose 1-diphosphate to orotate, leading to the formation of orotidine monophosphate (OMP). The sequence is that of Orotate phosphoribosyltransferase from Bartonella tribocorum (strain CIP 105476 / IBS 506).